Consider the following 148-residue polypeptide: Trypsin inhibitor CMe (148 aa).

Positions 1–24 (MAFKYQLLLSAAVMLAILVATATS) are cleaved as a signal peptide.

It belongs to the protease inhibitor I6 (cereal trypsin/alpha-amylase inhibitor) family. Post-translationally, five disulfide bonds, which are essential for the inhibitor activity, are probably present. As to expression, expressed in the developing endosperm. Not detected in embryo, aleurone, coleoptile, roots and leaves.

The protein resides in the secreted. Inhibits trypsin in vitro. Probably plays a protective role through inhibition of insect midgut proteases. The sequence is that of Trypsin inhibitor CMe (ITR1) from Hordeum vulgare (Barley).